We begin with the raw amino-acid sequence, 226 residues long: MSFTGTLDKCKACDKTVYVMDLLTLEGNTYHKSCFRCTHCKGTLVISNYSSMDGVLYCKPHFEQLFKESGNYSKNFQAGKTEKPNDHLTRTPSKLSSFFSGTQDKCATCKKTVYPLEKVTMEGESYHKTCFRCTHSGCPLTHSSYASLNGVLYCKVHFNQLFLEKGSYNHVHQAAANHRRSASSGGASPPSDDHKPDDTASIPEAKEDDAAPEAAGEEEPEPVVES.

LIM zinc-binding domains follow at residues 8 to 68 and 104 to 164; these read DKCK…LFKE and DKCA…LFLE. Positions 173 to 226 are disordered; the sequence is QAAANHRRSASSGGASPPSDDHKPDDTASIPEAKEDDAAPEAAGEEEPEPVVES. Residues 191–209 show a composition bias toward basic and acidic residues; it reads SDDHKPDDTASIPEAKEDD. Over residues 210 to 226 the composition is skewed to acidic residues; that stretch reads AAPEAAGEEEPEPVVES.

Interacts with F-actin. Predominantly expressed in flowers, in the tapetum and in pollen grains. Detected in leaves and stems.

It is found in the cytoplasm. Its subcellular location is the cytoskeleton. Binds to actin filaments and promotes cross-linking into thick bundles. Has an actin-stabilizing activity. The actin regulatory activities are inhibited by pH &gt; 6.8 but are [Ca(2+)] independent. In Arabidopsis thaliana (Mouse-ear cress), this protein is LIM domain-containing protein PLIM2a.